Here is a 365-residue protein sequence, read N- to C-terminus: Spermidine-binding periplasmic protein SpuE (365 aa).

The signal sequence occupies residues methionine 1–alanine 24. Threonine 35, glutamate 181, aspartate 242, and asparagine 269 together coordinate spermidine.

This sequence belongs to the bacterial solute-binding protein PotD/PotF family.

Its subcellular location is the periplasm. Spermidine-binding protein probably required for its uptake into cells. Binds spermidine with high affinity (KD=14.3 nM). Does not bind putrescine, cadaverine or spermine. Spermidine binding induces large inter-domain conformational changes. Implicated in induction of type 3 secretion systems (T3SS), which play a role in virulence. The protein is Spermidine-binding periplasmic protein SpuE (spuE) of Pseudomonas aeruginosa (strain ATCC 15692 / DSM 22644 / CIP 104116 / JCM 14847 / LMG 12228 / 1C / PRS 101 / PAO1).